Reading from the N-terminus, the 737-residue chain is MADEVALALQAAGSPSAAAAMEAASQPADEPLRKRPRRDGPGLGRSPGEPSAAVAPAAAGCEAASAAAPAALWREAAGAAASAEREAPATAVAGDGDNGSGLRREPRAADDFDDDEGEEEDEAAAAAAAAAIGYRDNLLLTDGLLTNGFHSCESDDDDRTSHASSSDWTPRPRIGPYTFVQQHLMIGTDPRTILKDLLPETIPPPELDDMTLWQIVINILSEPPKRKKRKDINTIEDAVKLLQECKKIIVLTGAGVSVSCGIPDFRSRDGIYARLAVDFPDLPDPQAMFDIEYFRKDPRPFFKFAKEIYPGQFQPSLCHKFIALSDKEGKLLRNYTQNIDTLEQVAGIQRILQCHGSFATASCLICKYKVDCEAVRGDIFNQVVPRCPRCPADEPLAIMKPEIVFFGENLPEQFHRAMKYDKDEVDLLIVIGSSLKVRPVALIPSSIPHEVPQILINREPLPHLHFDVELLGDCDVIINELCHRLGGEYAKLCCNPVKLSEITEKPPRPQKELVHLSELPPTPLHISEDSSSPERTVPQDSSVIATLVDQATNNNVNDLEVSESSCVEEKPQEVQTSRNVENINVENPDFKAVGSSTADKNERTSVAETVRKCWPNRLAKEQISKRLEGNQYLFVPPNRYIFHGAEVYSDSEDDVLSSSSCGSNSDSGTCQSPSLEEPLEDESEIEEFYNGLEDDTERPECAGGSGFGADGGDQEVVNEAIATRQELTDVNYPSDKS.

Residues 1–28 (MADEVALALQAAGSPSAAAAMEAASQPA) show a composition bias toward low complexity. Disordered regions lie at residues 1 to 56 (MADE…AVAP) and 75 to 125 (EAAG…EAAA). At Ala2 the chain carries N-acetylalanine. The segment at 2-131 (ADEVALALQA…EAAAAAAAAA (130 aa)) is interaction with CLOCK. An interaction with H1-4 region spans residues 2–268 (ADEVALALQA…SCGIPDFRSR (267 aa)). 2 positions are modified to phosphoserine: Ser14 and Ser25. The Nuclear localization signal signature appears at 32-39 (LRKRPRRD). Residue Ser46 is modified to Phosphoserine; by MAPK8. 2 stretches are compositionally biased toward low complexity: residues 46–56 (SPGEPSAAVAP) and 75–94 (EAAG…AVAG). Positions 111 to 123 (DFDDDEGEEEDEA) are enriched in acidic residues. The interaction with CCAR2 stretch occupies residues 135–533 (RDNLLLTDGL…LHISEDSSSP (399 aa)). Residues 138-145 (LLLTDGLL) carry the Nuclear export signal motif. Ser151, Ser154, Ser164, and Ser165 each carry phosphoserine. A disordered region spans residues 152–171 (CESDDDDRTSHASSSDWTPR). The Nuclear localization signal signature appears at 223-230 (PPKRKKRK). Positions 228 to 488 (KRKDINTIED…NELCHRLGGE (261 aa)) constitute a Deacetylase sirtuin-type domain. An N6-acetyllysine modification is found at Lys230. The segment at 248-251 (IIVL) is required for interaction with the sumoylated form of CCAR2. NAD(+)-binding positions include 253-272 (GAGV…DGIY) and 337-340 (QNID). His355 acts as the Proton acceptor in catalysis. Positions 363 and 366 each coordinate Zn(2+). The residue at position 369 (Lys369) is an N6-acetyllysine. 2 residues coordinate Zn(2+): Cys387 and Cys390. 2 positions are modified to S-nitrosocysteine: Cys387 and Cys390. At Lys422 the chain carries N6-acetyllysine. Residues 425 to 431 (VDLLIVI) carry the Nuclear export signal motif. NAD(+) contacts are provided by residues 432–434 (GSS), 457–459 (NRE), and Cys474. The residue at position 505 (Lys505) is an N6-acetyllysine. Residues 514–539 (VHLSELPPTPLHISEDSSSPERTVPQ) form a disordered region. The residue at position 522 (Thr522) is a Phosphothreonine; by DYRK1A, DYRK3 and MAPK8. Ser527 is modified (phosphoserine). Residues 529-539 (DSSSPERTVPQ) show a composition bias toward polar residues. Residue Thr536 is modified to Phosphothreonine. Lys600 bears the N6-acetyllysine mark. Ser649 and Ser651 each carry phosphoserine; by CaMK2. The disordered stretch occupies residues 653–713 (DDVLSSSSCG…GSGFGADGGD (61 aa)). Positions 656-676 (LSSSSCGSNSDSGTCQSPSLE) are enriched in low complexity. Over residues 677–697 (EPLEDESEIEEFYNGLEDDTE) the composition is skewed to acidic residues. Position 737 is a phosphoserine (Ser737).

Belongs to the sirtuin family. Class I subfamily. In terms of assembly, interacts with XBP1 isoform 2. Found in a complex with PCAF and MYOD1 Component of the eNoSC complex, composed of SIRT1, SUV39H1 and RRP8. Interacts with HES1, HEY2 and PML. Interacts with RPS19BP1/AROS. Interacts with CCAR2 (via N-terminus); the interaction disrupts the interaction between SIRT1 and p53/TP53. Interacts with SETD7; the interaction induces the dissociation of SIRT1 from p53/TP53 and increases p53/TP53 activity. Interacts with MYCN, NR1I2, CREBZF, TSC2, TLE1, FOS, JUN, NR0B2, PPARG, NCOR, IRS1, IRS2 and NMNAT1. Interacts with HNF1A; the interaction occurs under nutrient restriction. Interacts with SUZ12; the interaction mediates the association with the PRC4 histone methylation complex which is specific as an association with PCR2 and PCR3 complex variants is not found. Interacts with FOXO1; the interaction deacetylates FOXO1, enhances its DNA-binding ability and increases its transcriptional activity. Interacts with BCL6; leads to a epigenetic repression of specific target genes. Interacts with CLOCK, BMAL1 and PER2. Interacts with PPARA; the interaction seems to be modulated by NAD(+) levels. Interacts with NR1H3 and this interaction is inhibited in the presence of CCAR2. Interacts with CHEK2 and p53/TP53. Exhibits a preferential interaction with sumoylated CCAR2 over its unmodified form. Interacts with PACS2. Interacts with SIRT7. Interacts with PUS7. Interacts with TULP3. Interacts with MORN3; the interaction enhances the ubiquitination of p53/TP53. Zn(2+) serves as cofactor. Methylated on multiple lysine residues; methylation is enhanced after DNA damage and is dispensable for deacetylase activity toward p53/TP53. Post-translationally, phosphorylated. Phosphorylated by STK4/MST1, resulting in inhibition of SIRT1-mediated p53/TP53 deacetylation. Phosphorylation by MAPK8/JNK1 at Ser-46 and Thr-522 leads to increased nuclear localization and enzymatic activity. Phosphorylation at Thr-522 by DYRK1A and DYRK3 activates deacetylase activity and promotes cell survival. Phosphorylation by mammalian target of rapamycin complex 1 (mTORC1) at Ser-46 inhibits deacetylation activity. Phosphorylated by CaMK2, leading to increased p53/TP53 and NF-kappa-B p65/RELA deacetylation activity. In terms of processing, proteolytically cleaved by cathepsin B upon TNF-alpha treatment to yield catalytic inactive but stable SirtT1 75 kDa fragment (75SirT1). S-nitrosylated by GAPDH, leading to inhibit the NAD-dependent protein deacetylase activity. Post-translationally, acetylated at various Lys residues. Deacetylated via an autocatalytic mechanism. Autodeacetylation at Lys-230 promotes its protein deacetylase activity. In terms of processing, ubiquitinated; leading to degradation. Deubiquitinated by USP22; leading to stabilization. Widely expressed. Weakly expressed in liver and skeletal muscle.

It localises to the nucleus. The protein resides in the PML body. Its subcellular location is the cytoplasm. The protein localises to the mitochondrion. It catalyses the reaction N(6)-acetyl-L-lysyl-[protein] + NAD(+) + H2O = 2''-O-acetyl-ADP-D-ribose + nicotinamide + L-lysyl-[protein]. It carries out the reaction N(6)-propanoyl-L-lysyl-[protein] + NAD(+) + H2O = 3''-O-propanoyl-ADP-D-ribose + nicotinamide + L-lysyl-[protein]. The enzyme catalyses N(6)-(2E)-butenoyl-L-lysyl-[protein] + NAD(+) + H2O = 2''-O-(2E)-but-2-enoyl-ADP-D-ribose + nicotinamide + L-lysyl-[protein]. The catalysed reaction is N(6)-[(S)-lactoyl]-L-lysyl-[protein] + NAD(+) + H2O = 2''-O-(S)-lactoyl-ADP-D-ribose + nicotinamide + L-lysyl-[protein]. With respect to regulation, activated by resveratrol (3,5,4'-trihydroxy-trans-stilbene), butein (3,4,2',4'-tetrahydroxychalcone), piceatannol (3,5,3',4'-tetrahydroxy-trans-stilbene), Isoliquiritigenin (4,2',4'-trihydroxychalcone), fisetin (3,7,3',4'-tetrahydroxyflavone) and quercetin (3,5,7,3',4'-pentahydroxyflavone). MAPK8/JNK1 and RPS19BP1/AROS act as positive regulators of deacetylation activity. Inhibited by nicotinamide. Negatively regulated by CCAR2. In terms of biological role, NAD-dependent protein deacetylase that links transcriptional regulation directly to intracellular energetics and participates in the coordination of several separated cellular functions such as cell cycle, response to DNA damage, metabolism, apoptosis and autophagy. Can modulate chromatin function through deacetylation of histones and can promote alterations in the methylation of histones and DNA, leading to transcriptional repression. Deacetylates a broad range of transcription factors and coregulators, thereby regulating target gene expression positively and negatively. Serves as a sensor of the cytosolic ratio of NAD(+)/NADH which is altered by glucose deprivation and metabolic changes associated with caloric restriction. Is essential in skeletal muscle cell differentiation and in response to low nutrients mediates the inhibitory effect on skeletal myoblast differentiation which also involves 5'-AMP-activated protein kinase (AMPK) and nicotinamide phosphoribosyltransferase (NAMPT). Component of the eNoSC (energy-dependent nucleolar silencing) complex, a complex that mediates silencing of rDNA in response to intracellular energy status and acts by recruiting histone-modifying enzymes. The eNoSC complex is able to sense the energy status of cell: upon glucose starvation, elevation of NAD(+)/NADP(+) ratio activates SIRT1, leading to histone H3 deacetylation followed by dimethylation of H3 at 'Lys-9' (H3K9me2) by SUV39H1 and the formation of silent chromatin in the rDNA locus. Deacetylates 'Lys-266' of SUV39H1, leading to its activation. Inhibits skeletal muscle differentiation by deacetylating PCAF and MYOD1. Deacetylates H2A and 'Lys-26' of H1-4. Deacetylates 'Lys-16' of histone H4 (in vitro). Involved in NR0B2/SHP corepression function through chromatin remodeling: Recruited to LRH1 target gene promoters by NR0B2/SHP thereby stimulating histone H3 and H4 deacetylation leading to transcriptional repression. Proposed to contribute to genomic integrity via positive regulation of telomere length; however, reports on localization to pericentromeric heterochromatin are conflicting. Proposed to play a role in constitutive heterochromatin (CH) formation and/or maintenance through regulation of the available pool of nuclear SUV39H1. Upon oxidative/metabolic stress decreases SUV39H1 degradation by inhibiting SUV39H1 polyubiquitination by MDM2. This increase in SUV39H1 levels enhances SUV39H1 turnover in CH, which in turn seems to accelerate renewal of the heterochromatin which correlates with greater genomic integrity during stress response. Deacetylates 'Lys-382' of p53/TP53 and impairs its ability to induce transcription-dependent proapoptotic program and modulate cell senescence. Deacetylates TAF1B and thereby represses rDNA transcription by the RNA polymerase I. Deacetylates MYC, promotes the association of MYC with MAX and decreases MYC stability leading to compromised transformational capability. Deacetylates FOXO3 in response to oxidative stress thereby increasing its ability to induce cell cycle arrest and resistance to oxidative stress but inhibiting FOXO3-mediated induction of apoptosis transcriptional activity; also leading to FOXO3 ubiquitination and protesomal degradation. Appears to have a similar effect on MLLT7/FOXO4 in regulation of transcriptional activity and apoptosis. Deacetylates DNMT1; thereby impairs DNMT1 methyltransferase-independent transcription repressor activity, modulates DNMT1 cell cycle regulatory function and DNMT1-mediated gene silencing. Deacetylates RELA/NF-kappa-B p65 thereby inhibiting its transactivating potential and augments apoptosis in response to TNF-alpha. Deacetylates HIF1A, KAT5/TIP60, RB1 and HIC1. Deacetylates FOXO1, which increases its DNA binding ability and enhances its transcriptional activity leading to increased gluconeogenesis in liver. Inhibits E2F1 transcriptional activity and apoptotic function, possibly by deacetylation. Involved in HES1- and HEY2-mediated transcriptional repression. In cooperation with MYCN seems to be involved in transcriptional repression of DUSP6/MAPK3 leading to MYCN stabilization by phosphorylation at 'Ser-62'. Deacetylates MEF2D. Required for antagonist-mediated transcription suppression of AR-dependent genes which may be linked to local deacetylation of histone H3. Represses HNF1A-mediated transcription. Required for the repression of ESRRG by CREBZF. Deacetylates NR1H3 and NR1H2 and deacetylation of NR1H3 at 'Lys-434' positively regulates transcription of NR1H3:RXR target genes, promotes NR1H3 proteasomal degradation and results in cholesterol efflux; a promoter clearing mechanism after reach round of transcription is proposed. Involved in lipid metabolism: deacetylates LPIN1, thereby inhibiting diacylglycerol synthesis. Implicated in regulation of adipogenesis and fat mobilization in white adipocytes by repression of PPARG which probably involves association with NCOR1 and SMRT/NCOR2. Deacetylates p300/EP300 and PRMT1. Deacetylates ACSS2 leading to its activation, and HMGCS1 deacetylation. Involved in liver and muscle metabolism. Through deacetylation and activation of PPARGC1A is required to activate fatty acid oxidation in skeletal muscle under low-glucose conditions and is involved in glucose homeostasis. Involved in regulation of PPARA and fatty acid beta-oxidation in liver. Involved in positive regulation of insulin secretion in pancreatic beta cells in response to glucose; the function seems to imply transcriptional repression of UCP2. Proposed to deacetylate IRS2 thereby facilitating its insulin-induced tyrosine phosphorylation. Deacetylates SREBF1 isoform SREBP-1C thereby decreasing its stability and transactivation in lipogenic gene expression. Involved in DNA damage response by repressing genes which are involved in DNA repair, such as XPC and TP73, deacetylating XRCC6/Ku70, and facilitating recruitment of additional factors to sites of damaged DNA, such as SIRT1-deacetylated NBN can recruit ATM to initiate DNA repair and SIRT1-deacetylated XPA interacts with RPA2. Also involved in DNA repair of DNA double-strand breaks by homologous recombination and specifically single-strand annealing independently of XRCC6/Ku70 and NBN. Promotes DNA double-strand breaks by mediating deacetylation of SIRT6. Transcriptional suppression of XPC probably involves an E2F4:RBL2 suppressor complex and protein kinase B (AKT) signaling. Transcriptional suppression of TP73 probably involves E2F4 and PCAF. Deacetylates WRN thereby regulating its helicase and exonuclease activities and regulates WRN nuclear translocation in response to DNA damage. Deacetylates APEX1 at 'Lys-6' and 'Lys-7' and stimulates cellular AP endonuclease activity by promoting the association of APEX1 to XRCC1. Catalyzes deacetylation of ERCC4/XPF, thereby impairing interaction with ERCC1 and nucleotide excision repair (NER). Increases p53/TP53-mediated transcription-independent apoptosis by blocking nuclear translocation of cytoplasmic p53/TP53 and probably redirecting it to mitochondria. Deacetylates XRCC6/Ku70 at 'Lys-537' and 'Lys-540' causing it to sequester BAX away from mitochondria thereby inhibiting stress-induced apoptosis. Is involved in autophagy, presumably by deacetylating ATG5, ATG7 and MAP1LC3B/ATG8. Deacetylates AKT1 which leads to enhanced binding of AKT1 and PDK1 to PIP3 and promotes their activation. Proposed to play role in regulation of STK11/LBK1-dependent AMPK signaling pathways implicated in cellular senescence which seems to involve the regulation of the acetylation status of STK11/LBK1. Can deacetylate STK11/LBK1 and thereby increase its activity, cytoplasmic localization and association with STRAD; however, the relevance of such activity in normal cells is unclear. In endothelial cells is shown to inhibit STK11/LBK1 activity and to promote its degradation. Deacetylates SMAD7 at 'Lys-64' and 'Lys-70' thereby promoting its degradation. Deacetylates CIITA and augments its MHC class II transactivation and contributes to its stability. Deacetylates MECOM/EVI1. Deacetylates PML at 'Lys-487' and this deacetylation promotes PML control of PER2 nuclear localization. During the neurogenic transition, represses selective NOTCH1-target genes through histone deacetylation in a BCL6-dependent manner and leading to neuronal differentiation. Regulates the circadian expression of several core clock genes, including BMAL1, RORC, PER2 and CRY1 and plays a critical role in maintaining a controlled rhythmicity in histone acetylation, thereby contributing to circadian chromatin remodeling. Deacetylates BMAL1 and histones at the circadian gene promoters in order to facilitate repression by inhibitory components of the circadian oscillator. Deacetylates PER2, facilitating its ubiquitination and degradation by the proteasome. Protects cardiomyocytes against palmitate-induced apoptosis. Deacetylates XBP1 isoform 2; deacetylation decreases protein stability of XBP1 isoform 2 and inhibits its transcriptional activity. Deacetylates PCK1 and directs its activity toward phosphoenolpyruvate production promoting gluconeogenesis. Involved in the CCAR2-mediated regulation of PCK1 and NR1D1. Deacetylates CTNB1 at 'Lys-49'. In POMC (pro-opiomelanocortin) neurons, required for leptin-induced activation of PI3K signaling. Deacetylates SOX9; promoting SOX9 nuclear localization and transactivation activity. Involved in the regulation of centrosome duplication: Deacetylates CENATAC in G1 phase, allowing for SASS6 accumulation on the centrosome and subsequent procentriole assembly. Deacetylates NDC80/HEC1. In addition to protein deacetylase activity, also acts as a protein-lysine deacylase by mediating protein delactylation, depropionylation and decrotonylation. Mediates depropionylation of Osterix (SP7). Catalyzes decrotonylation of histones; it however does not represent a major histone decrotonylase. Mediates protein delactylation of TEAD1 and YAP1. Functionally, deacetylates 'Lys-382' of p53/TP53, however with lower activity than isoform 1. In combination, the two isoforms exert an additive effect. Isoform 2 regulates p53/TP53 expression and cellular stress response and is in turn repressed by p53/TP53 presenting a SIRT1 isoform-dependent auto-regulatory loop. Catalytically inactive 75SirT1 may be involved in regulation of apoptosis. May be involved in protecting chondrocytes from apoptotic death by associating with cytochrome C and interfering with apoptosome assembly. The protein is NAD-dependent protein deacetylase sirtuin-1 (Sirt1) of Mus musculus (Mouse).